The primary structure comprises 407 residues: Cysteine desulfurase (407 aa).

Lys-226 bears the N6-(pyridoxal phosphate)lysine mark. The active-site Cysteine persulfide intermediate is Cys-364.

It belongs to the class-V pyridoxal-phosphate-dependent aminotransferase family. Csd subfamily. As to quaternary structure, homodimer. Interacts with SufE and the SufBCD complex composed of SufB, SufC and SufD. The interaction with SufE is required to mediate the direct transfer of the sulfur atom from the S-sulfanylcysteine. The cofactor is pyridoxal 5'-phosphate.

Its subcellular location is the cytoplasm. The catalysed reaction is (sulfur carrier)-H + L-cysteine = (sulfur carrier)-SH + L-alanine. The enzyme catalyses L-selenocysteine + AH2 = hydrogenselenide + L-alanine + A + H(+). The protein operates within cofactor biosynthesis; iron-sulfur cluster biosynthesis. Cysteine desulfurases mobilize the sulfur from L-cysteine to yield L-alanine, an essential step in sulfur metabolism for biosynthesis of a variety of sulfur-containing biomolecules. Component of the suf operon, which is activated and required under specific conditions such as oxidative stress and iron limitation. Acts as a potent selenocysteine lyase in vitro, that mobilizes selenium from L-selenocysteine. Selenocysteine lyase activity is however unsure in vivo. The sequence is that of Cysteine desulfurase from Pectobacterium atrosepticum (strain SCRI 1043 / ATCC BAA-672) (Erwinia carotovora subsp. atroseptica).